A 472-amino-acid chain; its full sequence is Citrate synthase, mitochondrial (472 aa).

Active-site residues include H308, H354, and D409.

It belongs to the citrate synthase family. In terms of assembly, homodimer.

Its subcellular location is the mitochondrion matrix. It carries out the reaction oxaloacetate + acetyl-CoA + H2O = citrate + CoA + H(+). It participates in carbohydrate metabolism; tricarboxylic acid cycle; isocitrate from oxaloacetate: step 1/2. In Daucus carota (Wild carrot), this protein is Citrate synthase, mitochondrial (CS).